The chain runs to 59 residues: UPF0391 membrane protein LPC_1949 (59 aa).

Transmembrane regions (helical) follow at residues 5 to 25 and 30 to 50; these read ALIF…GIAV and IAKI…IMGL.

It belongs to the UPF0391 family.

The protein resides in the cell membrane. The polypeptide is UPF0391 membrane protein LPC_1949 (Legionella pneumophila (strain Corby)).